A 164-amino-acid polypeptide reads, in one-letter code: Phosphopantetheine adenylyltransferase (164 aa).

Thr-14 is a binding site for substrate. Residues 14 to 15 (TF) and His-22 contribute to the ATP site. Substrate is bound by residues Lys-46, Met-78, and Arg-92. ATP contacts are provided by residues 93-95 (GLR), Glu-103, and 128-134 (HAFISST).

Belongs to the bacterial CoaD family. As to quaternary structure, homohexamer. The cofactor is Mg(2+).

It is found in the cytoplasm. It carries out the reaction (R)-4'-phosphopantetheine + ATP + H(+) = 3'-dephospho-CoA + diphosphate. It participates in cofactor biosynthesis; coenzyme A biosynthesis; CoA from (R)-pantothenate: step 4/5. Functionally, reversibly transfers an adenylyl group from ATP to 4'-phosphopantetheine, yielding dephospho-CoA (dPCoA) and pyrophosphate. This is Phosphopantetheine adenylyltransferase from Vibrio vulnificus (strain CMCP6).